A 458-amino-acid polypeptide reads, in one-letter code: Bone morphogenetic protein 3 (458 aa).

Residues 1-23 (MAECRPWLVLWVGCCGCLCLALG) form the signal peptide. Positions 24–348 (ELLNDGLLAV…EQTLKKARRK (325 aa)) are excised as a propeptide. N-linked (GlcNAc...) asparagine glycosylation is present at Asn-107. 2 disordered regions span residues 244–275 (DSVV…KKRS) and 303–335 (ERKP…SQTL). Residues 320–329 (NKKKLRKGSR) show a composition bias toward basic residues. 3 disulfide bridges follow: Cys-356–Cys-423, Cys-385–Cys-455, and Cys-389–Cys-457. Asn-449 carries N-linked (GlcNAc...) asparagine glycosylation.

This sequence belongs to the TGF-beta family. As to quaternary structure, homodimer. Can form heterodimers with ADMP, BMP-2-I and/or BMP-2-II, and DERRIERE.

It is found in the secreted. In terms of biological role, dorsalizing factor. Antagonizes mesoderm formation by ventralizing BMPs. The protein is Bone morphogenetic protein 3 (bmp3) of Xenopus laevis (African clawed frog).